The following is a 177-amino-acid chain: Large ribosomal subunit protein bL31m (177 aa).

Residues 1-14 constitute a mitochondrion transit peptide; that stretch reads MLKSIFAKRFASTG. The tract at residues 36–118 is sufficient for general mitochondrial translation; sequence KSRPAIYHQF…FSVDSTTPNS (83 aa). The segment at 87 to 177 is sufficient for dosage suppression of COX2 mutation; that stretch reads LVVVDANSGG…KLASKKRDKK (91 aa). Polar residues predominate over residues 111-123; sequence VDSTTPNSSSETV. A disordered region spans residues 111 to 144; that stretch reads VDSTTPNSSSETVELSEENKKKTQIKKEEKEDVS. Over residues 127–144 the composition is skewed to basic and acidic residues; that stretch reads EENKKKTQIKKEEKEDVS.

This sequence belongs to the bacterial ribosomal protein bL31 family. Highly divergent. Component of the mitochondrial large ribosomal subunit (mt-LSU). Mature yeast 74S mitochondrial ribosomes consist of a small (37S) and a large (54S) subunit. The 37S small subunit contains a 15S ribosomal RNA (15S mt-rRNA) and 34 different proteins. The 54S large subunit contains a 21S rRNA (21S mt-rRNA) and 46 different proteins.

Its subcellular location is the mitochondrion. Functionally, component of the mitochondrial ribosome (mitoribosome), a dedicated translation machinery responsible for the synthesis of mitochondrial genome-encoded proteins, including at least some of the essential transmembrane subunits of the mitochondrial respiratory chain. The mitoribosomes are attached to the mitochondrial inner membrane and translation products are cotranslationally integrated into the membrane. Overexpression of bL31m suppresses mutations in the COX2 leader peptide-encoding and initiation codon regions. This chain is Large ribosomal subunit protein bL31m (MRPL36), found in Saccharomyces cerevisiae (strain ATCC 204508 / S288c) (Baker's yeast).